We begin with the raw amino-acid sequence, 617 residues long: UvrABC system protein C (617 aa).

The region spanning 22-100 is the GIY-YIG domain; that stretch reads NLPGVYRFFN…IKALSPKYNI (79 aa). The region spanning 209–244 is the UVR domain; the sequence is DELTRTLQHKMQTAAANLQFEEAARYRDQIQALGIM.

It belongs to the UvrC family. As to quaternary structure, interacts with UvrB in an incision complex.

It is found in the cytoplasm. The UvrABC repair system catalyzes the recognition and processing of DNA lesions. UvrC both incises the 5' and 3' sides of the lesion. The N-terminal half is responsible for the 3' incision and the C-terminal half is responsible for the 5' incision. The protein is UvrABC system protein C of Neisseria meningitidis serogroup B (strain ATCC BAA-335 / MC58).